The sequence spans 265 residues: Seminal vesicle secretory protein 3A (265 aa).

Residues 1-20 (MKSIFFSLSLLLLLEKKAAG) form the signal peptide. 5 consecutive repeat copies span residues 116 to 119 (QIKS), 122 to 125 (QVKS), 129 to 132 (QLKS), 136 to 139 (QLKT), and 142 to 145 (QVKS). Positions 116–145 (QIKSQTQVKSYAAQLKSQPGQLKTIGQVKS) are 5 X 4 AA tandem repeats of Q-X-K-[ST].

Glycosylated. Post-translationally, covalently cross-linked by transglutaminase, which is important for the formation of the gelatinous copulatory plug. Five repeats of Q-X-K-(S/T) in the central region of the protein serve as the transglutaminase substrate site(s). In terms of tissue distribution, highly expressed in the seminal vesicle where it is detected in luminal epithelium of the mucosa folds, and also in luminal fluid (at protein level). Not detected in other tissues tested.

The protein localises to the secreted. Its function is as follows. Component of the copulatory plug. The protein is Seminal vesicle secretory protein 3A of Mus musculus (Mouse).